The primary structure comprises 268 residues: Thymidylate synthase (268 aa).

Residue arginine 27 participates in dUMP binding. Histidine 57 serves as a coordination point for (6R)-5,10-methylene-5,6,7,8-tetrahydrofolate. 132 to 133 (RR) contacts dUMP. Catalysis depends on cysteine 152, which acts as the Nucleophile. DUMP-binding positions include 172 to 175 (RSAD), asparagine 183, and 213 to 215 (HVY). Residue aspartate 175 participates in (6R)-5,10-methylene-5,6,7,8-tetrahydrofolate binding. Alanine 267 lines the (6R)-5,10-methylene-5,6,7,8-tetrahydrofolate pocket.

The protein belongs to the thymidylate synthase family. Bacterial-type ThyA subfamily. In terms of assembly, homodimer.

It localises to the cytoplasm. The catalysed reaction is dUMP + (6R)-5,10-methylene-5,6,7,8-tetrahydrofolate = 7,8-dihydrofolate + dTMP. Its pathway is pyrimidine metabolism; dTTP biosynthesis. In terms of biological role, catalyzes the reductive methylation of 2'-deoxyuridine-5'-monophosphate (dUMP) to 2'-deoxythymidine-5'-monophosphate (dTMP) while utilizing 5,10-methylenetetrahydrofolate (mTHF) as the methyl donor and reductant in the reaction, yielding dihydrofolate (DHF) as a by-product. This enzymatic reaction provides an intracellular de novo source of dTMP, an essential precursor for DNA biosynthesis. The sequence is that of Thymidylate synthase from Kineococcus radiotolerans (strain ATCC BAA-149 / DSM 14245 / SRS30216).